A 23-amino-acid polypeptide reads, in one-letter code: Thymidine phosphorylase (23 aa).

It belongs to the thymidine/pyrimidine-nucleoside phosphorylase family. Homodimer.

It carries out the reaction thymidine + phosphate = 2-deoxy-alpha-D-ribose 1-phosphate + thymine. In terms of biological role, the enzymes which catalyze the reversible phosphorolysis of pyrimidine nucleosides are involved in the degradation of these compounds and in their utilization as carbon and energy sources, or in the rescue of pyrimidine bases for nucleotide synthesis. The sequence is that of Thymidine phosphorylase (deoA) from Lacticaseibacillus rhamnosus (Lactobacillus rhamnosus).